The following is a 1039-amino-acid chain: Probable inorganic carbon transporter subunit DabA 1 (1039 aa).

Positions 462, 464, 721, and 736 each coordinate Zn(2+).

This sequence belongs to the inorganic carbon transporter (TC 9.A.2) DabA family. Forms a complex with DabB. Requires Zn(2+) as cofactor.

It localises to the cell inner membrane. Functionally, part of an energy-coupled inorganic carbon pump. The chain is Probable inorganic carbon transporter subunit DabA 1 from Nitrobacter hamburgensis (strain DSM 10229 / NCIMB 13809 / X14).